The sequence spans 43 residues: Plasma membrane ATPase proteolipid 2 (43 aa).

Positions 1 to 5 are excised as a propeptide; it reads MLMST. A helical membrane pass occupies residues 9–29; that stretch reads GVILVFILVGLACIAIISTII. Over 30 to 43 the chain is Cytoplasmic; that stretch reads YRKWQARQRGLQRF.

As to quaternary structure, monomer and homodimer. Associated with the 100 kDa subunit of the plasma membrane H(+)-ATPase.

The protein resides in the cell membrane. The protein is Plasma membrane ATPase proteolipid 2 (PMP2) of Saccharomyces cerevisiae (strain ATCC 204508 / S288c) (Baker's yeast).